We begin with the raw amino-acid sequence, 167 residues long: Leukotoxin-activating lysine-acyltransferase LktC serotype A11 (167 aa).

Active-site residues include His22 and Asp91.

Belongs to the RTX toxin acyltransferase family.

The protein localises to the cytoplasm. The catalysed reaction is a fatty acyl-[ACP] + L-lysyl-[protein] = N(6)-(fatty acyl)-L-lysyl-[protein] + holo-[ACP] + H(+). Functionally, involved in fatty acylation of the protoxin (LktA) at two internal lysine residues, thereby converting it to the active toxin. The sequence is that of Leukotoxin-activating lysine-acyltransferase LktC serotype A11 (lktC) from Mannheimia haemolytica (Pasteurella haemolytica).